The chain runs to 680 residues: Methionine--tRNA ligase (680 aa).

The 'HIGH' region motif lies at 15-25 (PYANGPVHIGH). Zn(2+)-binding residues include Cys-147, Cys-150, Cys-160, and Cys-163. Residues 332 to 336 (KISTS) carry the 'KMSKS' region motif. Thr-335 serves as a coordination point for ATP. The region spanning 579–680 (DFLKLDIRVG…AEVAPGSQVK (102 aa)) is the tRNA-binding domain.

This sequence belongs to the class-I aminoacyl-tRNA synthetase family. MetG type 1 subfamily. As to quaternary structure, homodimer. It depends on Zn(2+) as a cofactor.

The protein resides in the cytoplasm. The catalysed reaction is tRNA(Met) + L-methionine + ATP = L-methionyl-tRNA(Met) + AMP + diphosphate. Is required not only for elongation of protein synthesis but also for the initiation of all mRNA translation through initiator tRNA(fMet) aminoacylation. The polypeptide is Methionine--tRNA ligase (Porphyromonas gingivalis (strain ATCC 33277 / DSM 20709 / CIP 103683 / JCM 12257 / NCTC 11834 / 2561)).